The chain runs to 122 residues: Large ribosomal subunit protein uL14 (122 aa).

The protein belongs to the universal ribosomal protein uL14 family. Part of the 50S ribosomal subunit. Forms a cluster with proteins L3 and L19. In the 70S ribosome, L14 and L19 interact and together make contacts with the 16S rRNA in bridges B5 and B8.

Binds to 23S rRNA. Forms part of two intersubunit bridges in the 70S ribosome. This chain is Large ribosomal subunit protein uL14, found in Rhodopseudomonas palustris (strain HaA2).